The primary structure comprises 412 residues: Exodeoxyribonuclease 7 large subunit (412 aa).

Belongs to the XseA family. As to quaternary structure, heterooligomer composed of large and small subunits.

The protein localises to the cytoplasm. The enzyme catalyses Exonucleolytic cleavage in either 5'- to 3'- or 3'- to 5'-direction to yield nucleoside 5'-phosphates.. Functionally, bidirectionally degrades single-stranded DNA into large acid-insoluble oligonucleotides, which are then degraded further into small acid-soluble oligonucleotides. The sequence is that of Exodeoxyribonuclease 7 large subunit from Nostoc sp. (strain PCC 7120 / SAG 25.82 / UTEX 2576).